The chain runs to 624 residues: Pentatricopeptide repeat-containing protein At4g31070, mitochondrial (624 aa).

Residues 1-15 constitute a mitochondrion transit peptide; that stretch reads MRWVKLGRRVIMSRA. PPR repeat units follow at residues 56–91, 92–122, 123–157, 158–192, 195–225, 226–260, 261–296, 297–327, 328–362, 363–397, 398–428, 429–463, 464–498, and 499–529; these read FTAI…GADC, DTVV…MLHR, DTVS…GFIP, KSEL…DERM, SVLL…MEVK, NEVS…NLRP, NRVT…GCHA, DERL…SKVR, DVVM…GIEA, NSVT…GFMS, HILL…LTEK, DLVS…GHEV, DDMA…HMPV, and TLEH…MPMK. Residues 534-610 form a type E motif region; sequence IWSSLLSACE…CYGFSKIEPE (77 aa).

The protein belongs to the PPR family. PCMP-E subfamily.

It localises to the mitochondrion. The polypeptide is Pentatricopeptide repeat-containing protein At4g31070, mitochondrial (PCMP-E7) (Arabidopsis thaliana (Mouse-ear cress)).